A 34-amino-acid chain; its full sequence is MSDIN-like toxin proprotein 7 (34 aa).

Positions 1-10 (MSDINATRLP) are excised as a propeptide. Positions 11–17 (AWLTDCP) form a cross-link, cyclopeptide (Ala-Pro). Residues 18–34 (CVGDDVNRLLTRGESLC) constitute a propeptide that is removed on maturation.

The protein belongs to the MSDIN fungal toxin family. Processed by the macrocyclase-peptidase enzyme POPB to yield a toxic cyclic heptapeptide. POPB first removes 10 residues from the N-terminus. Conformational trapping of the remaining peptide forces the enzyme to release this intermediate rather than proceed to macrocyclization. The enzyme rebinds the remaining peptide in a different conformation and catalyzes macrocyclization of the N-terminal 7 residues. In terms of tissue distribution, expressed in basidiocarps.

Functionally, probable toxin that belongs to the MSDIN-like toxin family responsible for a large number of food poisoning cases and deaths. This Amanita exitialis (Guangzhou destroying angel) protein is MSDIN-like toxin proprotein 7.